Reading from the N-terminus, the 53-residue chain is IgA-inducing protein homolog (53 aa).

Residues 1–30 (MCSYYHMKKRSVSGCNITIFAVMFSHLSAG) form the signal peptide.

It is found in the secreted. Its function is as follows. Enhances IgA secretion from B-cells stimulated via CD40. The polypeptide is IgA-inducing protein homolog (IGIP) (Homo sapiens (Human)).